The primary structure comprises 280 residues: Shikimate dehydrogenase (NADP(+)) (280 aa).

Residues 15-17 (SLS) and Thr-62 contribute to the shikimate site. Residue Lys-66 is the Proton acceptor of the active site. 2 residues coordinate shikimate: Asn-88 and Asp-104. NADP(+) is bound by residues 128-132 (GAGGA), 151-156 (NRTEER), and Ile-222. Tyr-224 is a binding site for shikimate. Gly-245 contacts NADP(+).

The protein belongs to the shikimate dehydrogenase family. In terms of assembly, homodimer.

The catalysed reaction is shikimate + NADP(+) = 3-dehydroshikimate + NADPH + H(+). It functions in the pathway metabolic intermediate biosynthesis; chorismate biosynthesis; chorismate from D-erythrose 4-phosphate and phosphoenolpyruvate: step 4/7. Involved in the biosynthesis of the chorismate, which leads to the biosynthesis of aromatic amino acids. Catalyzes the reversible NADPH linked reduction of 3-dehydroshikimate (DHSA) to yield shikimate (SA). This is Shikimate dehydrogenase (NADP(+)) from Methanosarcina mazei (strain ATCC BAA-159 / DSM 3647 / Goe1 / Go1 / JCM 11833 / OCM 88) (Methanosarcina frisia).